A 200-amino-acid polypeptide reads, in one-letter code: Holliday junction branch migration complex subunit RuvA (200 aa).

Residues 1-64 form a domain I region; sequence MYAYFRGRLV…EDALQLYGFA (64 aa). Residues 65 to 143 form a domain II region; sequence TEEEKQLFRL…KLAPVGSAVA (79 aa). The interval 144-154 is flexible linker; the sequence is SVAADRGGFRE. A domain III region spans residues 154–200; that stretch reads EDAVNALMTLGFPRPVANQAVGCALEPEPDASLEVVIKRALATMHNR.

It belongs to the RuvA family. As to quaternary structure, homotetramer. Forms an RuvA(8)-RuvB(12)-Holliday junction (HJ) complex. HJ DNA is sandwiched between 2 RuvA tetramers; dsDNA enters through RuvA and exits via RuvB. An RuvB hexamer assembles on each DNA strand where it exits the tetramer. Each RuvB hexamer is contacted by two RuvA subunits (via domain III) on 2 adjacent RuvB subunits; this complex drives branch migration. In the full resolvosome a probable DNA-RuvA(4)-RuvB(12)-RuvC(2) complex forms which resolves the HJ.

Its subcellular location is the cytoplasm. Its function is as follows. The RuvA-RuvB-RuvC complex processes Holliday junction (HJ) DNA during genetic recombination and DNA repair, while the RuvA-RuvB complex plays an important role in the rescue of blocked DNA replication forks via replication fork reversal (RFR). RuvA specifically binds to HJ cruciform DNA, conferring on it an open structure. The RuvB hexamer acts as an ATP-dependent pump, pulling dsDNA into and through the RuvAB complex. HJ branch migration allows RuvC to scan DNA until it finds its consensus sequence, where it cleaves and resolves the cruciform DNA. The protein is Holliday junction branch migration complex subunit RuvA of Chlorobium phaeovibrioides (strain DSM 265 / 1930) (Prosthecochloris vibrioformis (strain DSM 265)).